The sequence spans 654 residues: Protein fem-1 homolog A-like (654 aa).

ANK repeat units lie at residues 2–31 (DLHT…REEL), 40–70 (GGGT…SVEA), 82–111 (EGAP…SVNR), 115–145 (TNST…DLEV), 149–178 (HGHT…QVNR), 182–211 (KGNT…RMER), and 214–243 (YGMT…SHEQ). Ser108 is modified (phosphoserine). The interval 241 to 265 (HEQLSGTELPGEGSSQMAGNHCSTP) is disordered. Positions 253-263 (GSSQMAGNHCS) are enriched in polar residues. 2 TPR repeats span residues 283 to 317 (VEAL…RHQG) and 375 to 408 (SYYI…QQNN). ANK repeat units follow at residues 519 to 561 (NGFT…DPDS) and 565 to 594 (DNNS…HMDA). Position 608 is a phosphoserine (Ser608).

The protein belongs to the fem-1 family. In terms of assembly, component of a CRL2 E3 ubiquitin-protein ligase complex, also named ECS (Elongin BC-CUL2/5-SOCS-box protein) complex, composed of CUL2, Elongin BC (ELOB and ELOC), RBX1 and substrate-specific adapter FEM1A.

It is found in the mitochondrion. Its subcellular location is the cytoplasm. It participates in protein modification; protein ubiquitination. In terms of biological role, substrate-recognition component of a Cul2-RING (CRL2) E3 ubiquitin-protein ligase complex of the DesCEND (destruction via C-end degrons) pathway, which recognizes a C-degron located at the extreme C terminus of target proteins, leading to their ubiquitination and degradation. The C-degron recognized by the DesCEND pathway is usually a motif of less than ten residues and can be present in full-length proteins, truncated proteins or proteolytically cleaved forms. The CRL2(FEM1A) complex specifically recognizes proteins with an arginine at the C-terminus: recognizes and binds proteins ending with -Lys/Arg-Xaa-Arg and -Lys/Arg-Xaa-Xaa-Arg C-degrons, such as SIL1 or OR51B2, leading to their ubiquitination and degradation. In Mus musculus (Mouse), this protein is Protein fem-1 homolog A-like.